The primary structure comprises 344 residues: Phosphate acyltransferase (344 aa).

The protein belongs to the PlsX family. In terms of assembly, homodimer. Probably interacts with PlsY.

Its subcellular location is the cytoplasm. It carries out the reaction a fatty acyl-[ACP] + phosphate = an acyl phosphate + holo-[ACP]. It functions in the pathway lipid metabolism; phospholipid metabolism. Catalyzes the reversible formation of acyl-phosphate (acyl-PO(4)) from acyl-[acyl-carrier-protein] (acyl-ACP). This enzyme utilizes acyl-ACP as fatty acyl donor, but not acyl-CoA. This chain is Phosphate acyltransferase, found in Thermosynechococcus vestitus (strain NIES-2133 / IAM M-273 / BP-1).